Consider the following 1147-residue polypeptide: Putative ATP-dependent RNA helicase L377 (1147 aa).

The Helicase ATP-binding domain occupies 108–315; it reads INPNTPYRGL…VELINYLRPK (208 aa). ATP is bound at residue 121 to 128; that stretch reads WGTGVGKS. The short motif at 264–267 is the DEAH box element; that stretch reads DEAH.

The protein belongs to the DEAD box helicase family. DEAH subfamily.

It is found in the virion. It carries out the reaction ATP + H2O = ADP + phosphate + H(+). This Acanthamoeba polyphaga (Amoeba) protein is Putative ATP-dependent RNA helicase L377.